A 240-amino-acid polypeptide reads, in one-letter code: Vacuolar-sorting protein SNF7 (240 aa).

Position 72 is a phosphothreonine (threonine 72). Phosphoserine occurs at positions 119 and 193. Residues 193 to 240 form a disordered region; sequence SENKVSLPSVPSNKIKQSENSVKDGEEEEDEEDEDEKALRELQAEMGL. Residues 195–212 are compositionally biased toward polar residues; it reads NKVSLPSVPSNKIKQSEN. A compositionally biased stretch (acidic residues) spans 217–228; that stretch reads GEEEEDEEDEDE. Residue lysine 229 forms a Glycyl lysine isopeptide (Lys-Gly) (interchain with G-Cter in ubiquitin) linkage. Residues 229-240 are compositionally biased toward basic and acidic residues; the sequence is KALRELQAEMGL.

Belongs to the SNF7 family. Core component of the ESCRT-III complex (endosomal sorting required for transport complex III). ESCRT-III appears to be sequentially assembled as a flat lattice on the endosome membrane and forms a transient 450 kDa complex that contains DID4, oligomerized SNF7, VPS20 and VPS24. SNF7 polymerizes into spirals at the surface of lipid bilayers. SNF7 polymerization is nucleated by association of SNF7 with VPS20; the process is terminated through association of VPS24, possibly by capping the SNF7 filament. Interacts with VTA1; the interaction requires DID2. Interacts with BRO1. Interacts with DOA4. Interacts with HEH1 and HEH2. Interacts with RIM20 and YGR122W.

It is found in the cytoplasm. The protein localises to the endosome membrane. It localises to the nucleus envelope. Its function is as follows. Acts a component of the ESCRT-III complex required for the sorting and concentration of proteins resulting in the entry of these proteins into the invaginating vesicles of the multivesicular body (MVB). The sequential action of ESCRT-0, -I, and -II together with the ordered assembly of ESCRT-III links membrane invagination to cargo sorting. Membrane scission in the neck of the growing vesicle releases mature, cargo-laden ILVs into the lumen. ESCRT-III is critical for late steps in MVB sorting, such as membrane invagination and final cargo sorting and recruitment of late-acting components of the sorting machinery. SNF7 is the most abundant ESCRT-III subunit which forms membrane-sculpting filaments with 30 Angstrom periodicity and a exposed cationic membrane-binding surface. Its activation requires a prominent conformational rearrangement to expose protein-membrane and protein-protein interfaces. SNF7 filaments then form spirals that could function as spiral springs. The elastic expansion of compressed SNF7 spirals generates an area difference between the two sides of the membrane and thus curvature which could be the origin of membrane deformation leading eventually to fission. SNF7 recruits BRO1, which in turn recruits DOA4, which deubiquitinates cargos before their enclosure within MVB vesicles. ESCRT-III is also recruited to the nuclear envelope (NE) by integral INM proteins to surveil and clear defective nuclear pore complex (NPC) assembly intermediates to ensure the fidelity of NPC assembly. This chain is Vacuolar-sorting protein SNF7, found in Saccharomyces cerevisiae (strain ATCC 204508 / S288c) (Baker's yeast).